The following is a 91-amino-acid chain: Small ribosomal subunit protein uS19 (91 aa).

The protein belongs to the universal ribosomal protein uS19 family.

Its function is as follows. Protein S19 forms a complex with S13 that binds strongly to the 16S ribosomal RNA. In Marinomonas sp. (strain MWYL1), this protein is Small ribosomal subunit protein uS19.